Reading from the N-terminus, the 359-residue chain is Protein mab-21-like 2 (359 aa).

The protein belongs to the mab-21 family. Expressed in the adult cerebellum and eye, with lower levels in the adult forebrain. In embryos at 10.5 days post-coitum strongly expressed in the rostral and distal regions of the developing neural retina, with no expression immediately adjacent to the closing optic fissure. Expression is also observed in the dorsal and ventral aspects of the developing forelimb bud and in the developing pharyngeal arches, as well as in the midbrain.

It is found in the nucleus. It localises to the cytoplasm. In terms of biological role, required for several aspects of embryonic development including normal development of the eye, notochord, neural tube and other organ tissues, and for embryonic turning. This chain is Protein mab-21-like 2 (Mab21l2), found in Mus musculus (Mouse).